The sequence spans 130 residues: Large ribosomal subunit protein uL22 (130 aa).

It belongs to the universal ribosomal protein uL22 family. In terms of assembly, part of the 50S ribosomal subunit.

This protein binds specifically to 23S rRNA; its binding is stimulated by other ribosomal proteins, e.g. L4, L17, and L20. It is important during the early stages of 50S assembly. It makes multiple contacts with different domains of the 23S rRNA in the assembled 50S subunit and ribosome. Its function is as follows. The globular domain of the protein is located near the polypeptide exit tunnel on the outside of the subunit, while an extended beta-hairpin is found that lines the wall of the exit tunnel in the center of the 70S ribosome. The protein is Large ribosomal subunit protein uL22 of Clavibacter michiganensis subsp. michiganensis (strain NCPPB 382).